We begin with the raw amino-acid sequence, 214 residues long: Adenylate kinase (214 aa).

An ATP-binding site is contributed by 10 to 15 (GAGKGT). Positions 30–59 (STGDMLRAAVKAGTPLGLEAKKVMDAGQLV) are NMP. Residues T31, R36, 57–59 (QLV), 85–88 (GFPR), and Q92 contribute to the AMP site. Residues 122-159 (GRRVHPGSGRVYHIVFNQPKVEGKDDVTGEDLAIRPDD) are LID. ATP contacts are provided by residues R123 and 132-133 (VY). AMP is bound by residues R156 and R167. Q200 serves as a coordination point for ATP.

It belongs to the adenylate kinase family. In terms of assembly, monomer.

The protein localises to the cytoplasm. It carries out the reaction AMP + ATP = 2 ADP. It functions in the pathway purine metabolism; AMP biosynthesis via salvage pathway; AMP from ADP: step 1/1. Functionally, catalyzes the reversible transfer of the terminal phosphate group between ATP and AMP. Plays an important role in cellular energy homeostasis and in adenine nucleotide metabolism. The chain is Adenylate kinase from Shewanella woodyi (strain ATCC 51908 / MS32).